We begin with the raw amino-acid sequence, 306 residues long: Oxygen-dependent coproporphyrinogen-III oxidase (306 aa).

S93 contacts substrate. The a divalent metal cation site is built by H97 and H107. The active-site Proton donor is H107. Residue 109–111 (NVR) coordinates substrate. Residues H146 and H176 each coordinate a divalent metal cation. Residues 241–276 (YVEYNLVYDRGTLFGLQSGGRTESILMSLPPQVAWG) form an important for dimerization region. Position 259–261 (259–261 (GGR)) interacts with substrate.

Belongs to the aerobic coproporphyrinogen-III oxidase family. In terms of assembly, homodimer. It depends on a divalent metal cation as a cofactor.

It is found in the cytoplasm. It catalyses the reaction coproporphyrinogen III + O2 + 2 H(+) = protoporphyrinogen IX + 2 CO2 + 2 H2O. Its pathway is porphyrin-containing compound metabolism; protoporphyrin-IX biosynthesis; protoporphyrinogen-IX from coproporphyrinogen-III (O2 route): step 1/1. In terms of biological role, involved in the heme biosynthesis. Catalyzes the aerobic oxidative decarboxylation of propionate groups of rings A and B of coproporphyrinogen-III to yield the vinyl groups in protoporphyrinogen-IX. In Stutzerimonas stutzeri (strain A1501) (Pseudomonas stutzeri), this protein is Oxygen-dependent coproporphyrinogen-III oxidase.